The chain runs to 192 residues: Imidazole glycerol phosphate synthase subunit HisH (192 aa).

Residues 1 to 192 enclose the Glutamine amidotransferase type-1 domain; sequence MIVIVDYGLG…QAIQGGFIND (192 aa). Cysteine 77 serves as the catalytic Nucleophile. Residues histidine 169 and glutamate 171 contribute to the active site.

In terms of assembly, heterodimer of HisH and HisF.

The protein resides in the cytoplasm. The enzyme catalyses 5-[(5-phospho-1-deoxy-D-ribulos-1-ylimino)methylamino]-1-(5-phospho-beta-D-ribosyl)imidazole-4-carboxamide + L-glutamine = D-erythro-1-(imidazol-4-yl)glycerol 3-phosphate + 5-amino-1-(5-phospho-beta-D-ribosyl)imidazole-4-carboxamide + L-glutamate + H(+). It catalyses the reaction L-glutamine + H2O = L-glutamate + NH4(+). Its pathway is amino-acid biosynthesis; L-histidine biosynthesis; L-histidine from 5-phospho-alpha-D-ribose 1-diphosphate: step 5/9. Functionally, IGPS catalyzes the conversion of PRFAR and glutamine to IGP, AICAR and glutamate. The HisH subunit catalyzes the hydrolysis of glutamine to glutamate and ammonia as part of the synthesis of IGP and AICAR. The resulting ammonia molecule is channeled to the active site of HisF. The chain is Imidazole glycerol phosphate synthase subunit HisH from Staphylococcus aureus (strain COL).